A 64-amino-acid polypeptide reads, in one-letter code: Sulfur carrier protein ThiS (64 aa).

Gly64 is modified (1-thioglycine; alternate). Residue Gly64 is modified to Glycyl adenylate; alternate. A Glycyl cysteine thioester (Gly-Cys) (interchain with C-192 in TtuC); alternate cross-link involves residue Gly64.

It belongs to the sulfur carrier protein ThiS family. In terms of processing, C-terminal thiocarboxylation occurs in 2 steps, it is first acyl-adenylated (-COAMP) by TtuC, then thiocarboxylated (-COSH) by the cysteine desulfurases IscS or SufS.

The protein operates within cofactor biosynthesis; thiamine diphosphate biosynthesis. Functionally, is the sulfur donor in the synthesis of the thiazole phosphate moiety of thiamine phosphate. The protein is Sulfur carrier protein ThiS of Thermus thermophilus (strain ATCC BAA-163 / DSM 7039 / HB27).